The sequence spans 249 residues: Triosephosphate isomerase (249 aa).

Substrate is bound at residue 9 to 11 (NWK). H95 serves as the catalytic Electrophile. Catalysis depends on E167, which acts as the Proton acceptor. Substrate contacts are provided by residues G173, S213, and 234-235 (GG).

It belongs to the triosephosphate isomerase family. Homodimer.

Its subcellular location is the cytoplasm. The enzyme catalyses D-glyceraldehyde 3-phosphate = dihydroxyacetone phosphate. Its pathway is carbohydrate biosynthesis; gluconeogenesis. It functions in the pathway carbohydrate degradation; glycolysis; D-glyceraldehyde 3-phosphate from glycerone phosphate: step 1/1. In terms of biological role, involved in the gluconeogenesis. Catalyzes stereospecifically the conversion of dihydroxyacetone phosphate (DHAP) to D-glyceraldehyde-3-phosphate (G3P). This is Triosephosphate isomerase from Solibacter usitatus (strain Ellin6076).